A 567-amino-acid chain; its full sequence is Arginine--tRNA ligase (567 aa).

Residues 121 to 131 (ANPNGPLHVGH) carry the 'HIGH' region motif.

This sequence belongs to the class-I aminoacyl-tRNA synthetase family.

The protein localises to the cytoplasm. It carries out the reaction tRNA(Arg) + L-arginine + ATP = L-arginyl-tRNA(Arg) + AMP + diphosphate. The polypeptide is Arginine--tRNA ligase (Methanosarcina acetivorans (strain ATCC 35395 / DSM 2834 / JCM 12185 / C2A)).